We begin with the raw amino-acid sequence, 597 residues long: Apurinic-apyrimidinic endonuclease 1 (597 aa).

Over residues Tyr-232–Thr-246 the composition is skewed to polar residues. The segment at Tyr-232–Asp-296 is disordered. Residues Asn-265 to Lys-274 show a composition bias toward low complexity. The Zn(2+) site is built by His-380, His-420, Glu-456, Asp-490, His-493, His-527, Asp-540, His-542, and Glu-572. His-493 contacts Mn(2+). Mn(2+) contacts are provided by Asp-540 and His-542.

It belongs to the AP endonuclease 2 family. Requires Zn(2+) as cofactor. Mn(2+) serves as cofactor. May be proteolytically cleaved into a 59 kDa form.

Its subcellular location is the mitochondrion. Apurinic/apyrimidinic (AP) endonuclease activity is enhanced with increasing concentrations of Mn(2+), while Zn(2+) initially enhances activity but subsequently inhibits activity in a concentration-dependent manner. Co(2+) inhibits apurinic/apyrimidinic (AP) endonuclease activity at concentrations greater than 2.5 mM. Plays a role in mitochondrial DNA base excision repair (BER) pathway induced by oxidative stress. Has apurinic/apyrimidinic (AP) endonuclease activity towards double-stranded DNA (dsDNA) with a preference for C as opposite base. Has 3'-phosphatase activity; removes 3'-phosphate from blunt-end, recessed, and gapped DNA templates and thus, removes 3'-blocks for DNA polymerase activity during BER. Lacks 3'-5' exonuclease activity and does not cleave damaged bases by nucleotide incision repair (NIR). The polypeptide is Apurinic-apyrimidinic endonuclease 1 (Plasmodium falciparum (isolate 3D7)).